A 236-amino-acid chain; its full sequence is Small ribosomal subunit protein uS2c (236 aa).

This sequence belongs to the universal ribosomal protein uS2 family.

The protein localises to the plastid. The protein resides in the chloroplast. This is Small ribosomal subunit protein uS2c (rps2) from Manihot esculenta (Cassava).